The sequence spans 222 residues: Twisted gastrulation protein homolog 1 (222 aa).

An N-terminal signal peptide occupies residues 1–24; the sequence is MKSHYIVLALASLTFLLCLPVSQS. 2 N-linked (GlcNAc...) asparagine glycosylation sites follow: asparagine 80 and asparagine 146.

It belongs to the twisted gastrulation protein family. Interacts with CHRD and/or BMP4. This interaction enhances CHRD/BMP4 complex formation. Interacts with BMP7. Expressed in lymph node, liver, kidney, and lung. Expression in the kidney was stronger in the medulla than in the cortex, particularly in the cells surrounding the medullary tubules. Expressed in growth plate cartilage of long bones, ribs, and digits and to a lesser extent also in the resting zone of the epiphysis, trabecular bone, and vertebral cartilage. Expression seems to be absent from other skeletal tissues including muscle, skin, and fibroblasts.

The protein resides in the secreted. Its function is as follows. May be involved in dorsoventral axis formation. Seems to antagonize BMP signaling by forming ternary complexes with CHRD and BMPs, thereby preventing BMPs from binding to their receptors. In addition to the anti-BMP function, also has pro-BMP activity, partly mediated by cleavage and degradation of CHRD, which releases BMPs from ternary complexes. May be an important modulator of BMP-regulated cartilage development and chondrocyte differentiation. May play a role in thymocyte development. The sequence is that of Twisted gastrulation protein homolog 1 (Twsg1) from Mus musculus (Mouse).